The sequence spans 301 residues: D-alanine--D-alanine ligase (301 aa).

The 196-residue stretch at 99–294 (KCILKAANIR…FSELIDMIID (196 aa)) folds into the ATP-grasp domain. 126 to 181 (IEGMGYPVVVKPTHGGSSVATFIIKEEKDIKNAVTEAFKWDSEVIIEKFIKGDEIT) contacts ATP. Mg(2+)-binding residues include Asp-248, Glu-261, and Asn-263.

This sequence belongs to the D-alanine--D-alanine ligase family. Requires Mg(2+) as cofactor. The cofactor is Mn(2+).

It is found in the cytoplasm. It catalyses the reaction 2 D-alanine + ATP = D-alanyl-D-alanine + ADP + phosphate + H(+). It functions in the pathway cell wall biogenesis; peptidoglycan biosynthesis. Its function is as follows. Cell wall formation. This chain is D-alanine--D-alanine ligase, found in Clostridium botulinum (strain Eklund 17B / Type B).